The sequence spans 772 residues: Gelsolin (772 aa).

Residues 1 to 17 (LGALVVALCALSPPARA) form the signal peptide. Positions 18-33 (ATASRGAPQARAPQGR) are excised as a propeptide. Residues 19-38 (TASRGAPQARAPQGRVSPMR) are disordered. The interval 41–166 (TMVVEHPEFL…YKKGGVASGF (126 aa)) is actin-severing. One copy of the Gelsolin-like 1 repeat lies at 66–148 (FDLVPVPPNL…VQGFESATFL (83 aa)). At Y76 the chain carries Phosphotyrosine. 6 residues coordinate Ca(2+): G82, D83, E114, D126, G131, and A133. Positions 113 to 116 (DESG) are actin-actin interfilament contact point. 152 to 159 (KSGLKYKK) serves as a coordination point for a 1,2-diacyl-sn-glycero-3-phospho-(1D-myo-inositol-4,5-bisphosphate). V162 provides a ligand contact to Ca(2+). 178-186 (RLFQVKGRR) contacts a 1,2-diacyl-sn-glycero-3-phospho-(1D-myo-inositol-4,5-bisphosphate). Residues 188 to 260 (VRATEVPVSW…SEEDAEPAGM (73 aa)) form a Gelsolin-like 2 repeat. G203 and D204 together coordinate Ca(2+). C205 and C218 are disulfide-bonded. The Ca(2+) site is built by E226, D276, E319, D320, and E344. One copy of the Gelsolin-like 3 repeat lies at 307-379 (DENPFAQGAL…LPEGGETPLF (73 aa)). 2 positions are modified to phosphotyrosine: Y399 and Y455. Positions 424-772 (AAQHGMDDDG…LDRAIAELAA (349 aa)) are actin-binding, Ca-sensitive. The stretch at 445–526 (SNKVPVDPAT…VQGKEPAHLM (82 aa)) is one Gelsolin-like 4 repeat. Ca(2+)-binding residues include G461, D462, E492, D504, G509, P511, and T541. A Gelsolin-like 5 repeat occupies 567 to 632 (RAVEVIPKAG…AEGSEPDSFW (66 aa)). K574 is subject to N6-acetyllysine. The Ca(2+) site is built by N581 and D582. Y593 carries the post-translational modification Phosphotyrosine. Ca(2+) is bound at residue E604. Residue Y641 is modified to Phosphotyrosine. Residues 671–746 (VEEVPGELMQ…VKQGFEPPSF (76 aa)) form a Gelsolin-like 6 repeat. Ca(2+)-binding residues include D686, D687, and E709. T732 is modified (phosphothreonine).

This sequence belongs to the villin/gelsolin family. As to quaternary structure, binds to actin and to fibronectin. Identified in a complex composed of ACTA1, COBL, GSN and TMSB4X. Interacts with the inactive form of EIF2AK2/PKR. Interacts with FLII. Phosphorylated on tyrosine residues in vitro.

It is found in the cytoplasm. The protein resides in the cytoskeleton. The protein localises to the secreted. Its function is as follows. Calcium-regulated, actin-modulating protein that binds to the plus (or barbed) ends of actin monomers or filaments, preventing monomer exchange (end-blocking or capping). It can promote the assembly of monomers into filaments (nucleation) as well as sever filaments already formed. Plays a role in ciliogenesis. The polypeptide is Gelsolin (GSN) (Sus scrofa (Pig)).